The primary structure comprises 84 residues: Anaphase-promoting complex subunit 11 (84 aa).

Residues 34-77 (CPDCKLPGDDCPLIWGACNHAFHLHCILKWVNSQTSQAHCPMCR) form an RING-type; atypical zinc finger.

The protein belongs to the RING-box family. As to quaternary structure, part of the APC/C complex composed of at least 10 subunits. Interacts with APC2.

The protein localises to the cytoplasm. The protein resides in the nucleus. Its pathway is protein modification; protein ubiquitination. Component of the anaphase promoting complex/cyclosome (APC/C), a cell cycle-regulated E3 ubiquitin-protein ligase complex that controls progression through mitosis and the G1 phase of the cell cycle. The APC/C complex controls several key steps in the cell cycle by mediating ubiquitination and subsequent degradation of target proteins such as cyclins. The APC/C complex is required for the female gametophyte development and is involved in several aspect of development by controlling cell division and cell elongation. Involved in the control of endoreduplication. May recruit the E2 ubiquitin-conjugating enzymes to the complex. This Arabidopsis thaliana (Mouse-ear cress) protein is Anaphase-promoting complex subunit 11.